We begin with the raw amino-acid sequence, 184 residues long: ATP synthase subunit b, chloroplastic (184 aa).

Residues 31–53 (LINLAVVIGVLVYFGKGVLTTIL) traverse the membrane as a helical segment.

This sequence belongs to the ATPase B chain family. As to quaternary structure, F-type ATPases have 2 components, F(1) - the catalytic core - and F(0) - the membrane proton channel. F(1) has five subunits: alpha(3), beta(3), gamma(1), delta(1), epsilon(1). F(0) has four main subunits: a(1), b(1), b'(1) and c(10-14). The alpha and beta chains form an alternating ring which encloses part of the gamma chain. F(1) is attached to F(0) by a central stalk formed by the gamma and epsilon chains, while a peripheral stalk is formed by the delta, b and b' chains.

The protein localises to the plastid. It is found in the chloroplast thylakoid membrane. F(1)F(0) ATP synthase produces ATP from ADP in the presence of a proton or sodium gradient. F-type ATPases consist of two structural domains, F(1) containing the extramembraneous catalytic core and F(0) containing the membrane proton channel, linked together by a central stalk and a peripheral stalk. During catalysis, ATP synthesis in the catalytic domain of F(1) is coupled via a rotary mechanism of the central stalk subunits to proton translocation. Functionally, component of the F(0) channel, it forms part of the peripheral stalk, linking F(1) to F(0). This is ATP synthase subunit b, chloroplastic from Staurastrum punctulatum (Green alga).